The sequence spans 475 residues: Tubulin gamma-1 chain (475 aa).

142-148 is a GTP binding site; the sequence is AGGTGSG. The disordered stretch occupies residues 453–475; that stretch reads VKRGNGPVDSKSEDSRSVTSAGS.

The protein belongs to the tubulin family. Interacts with Ote.

The protein resides in the cytoplasm. It is found in the cytoskeleton. It localises to the microtubule organizing center. The protein localises to the centrosome. Its subcellular location is the perinuclear region. Tubulin is the major constituent of microtubules. The gamma chain is found at microtubule organizing centers (MTOC) such as the spindle poles or the centrosome, suggesting that it is involved in the minus-end nucleation of microtubule assembly. The protein is Tubulin gamma-1 chain (gammaTub23C) of Drosophila melanogaster (Fruit fly).